A 142-amino-acid chain; its full sequence is Nitrogen fixation protein NifU 2 (142 aa).

Residues 1–36 (MKDLFDESLTLDTGSAAPGTAPGRPRRRQPAGGKAP) form a disordered region. The segment covering 14 to 23 (GSAAPGTAPG) has biased composition (low complexity).

Belongs to the NifU family.

May be involved in the formation or repair of [Fe-S] clusters present in iron-sulfur proteins. In Rhodobacter capsulatus (Rhodopseudomonas capsulata), this protein is Nitrogen fixation protein NifU 2 (nifU2).